Here is a 114-residue protein sequence, read N- to C-terminus: MNKLIDEITKGQLNPDVPSFRPGDTVRVHAKVVEGTRERIQLFEGVVIKRRGAGISETFTVRKISNSVGVERTFPVHTPRIAKLEVIRRGKVRRAKLYYLRNLRGKAARIKEIR.

The protein belongs to the bacterial ribosomal protein bL19 family.

Functionally, this protein is located at the 30S-50S ribosomal subunit interface and may play a role in the structure and function of the aminoacyl-tRNA binding site. The polypeptide is Large ribosomal subunit protein bL19 (Listeria welshimeri serovar 6b (strain ATCC 35897 / DSM 20650 / CCUG 15529 / CIP 8149 / NCTC 11857 / SLCC 5334 / V8)).